The sequence spans 478 residues: Transcript termination protein A18 (478 aa).

The Helicase ATP-binding domain occupies 98 to 254 (KLSTHRPMYM…NDVVNVLKVS (157 aa)). Residue 111–118 (LSCGFGKT) coordinates ATP. Residues 204–207 (DESH) carry the DESH box motif. In terms of domain architecture, Helicase C-terminal spans 302–468 (PRNNLIVETV…GIEGTKEEPV (167 aa)).

This sequence belongs to the helicase family. Poxviruses subfamily. Interacts with G2. Might be part of a transcription complex composed at least of G2, A18, and H5.

It localises to the virion. Its function is as follows. DNA helicase which seems to act as a postreplicative transcription termination factor. Involved in ATP-dependent release of nascent RNA. Forms a stable complex with single-stranded DNA, and to a lesser extent RNA. This chain is Transcript termination protein A18, found in Rabbit fibroma virus (strain Kasza) (RFV).